The following is a 339-amino-acid chain: Ketol-acid reductoisomerase (NADP(+)) (339 aa).

The KARI N-terminal Rossmann domain occupies 1–182; it reads MRVYYDRDAD…GGGRSGIIET (182 aa). NADP(+) contacts are provided by residues 24 to 27, Arg-48, Ser-51, Ser-53, and 83 to 86; these read YGSQ and DELQ. The active site involves His-108. Gly-134 is a binding site for NADP(+). A KARI C-terminal knotted domain is found at 183 to 328; that stretch reads TFREECETDL…GRLRAMMPWI (146 aa). Residues Asp-191, Glu-195, Glu-227, and Glu-231 each coordinate Mg(2+). Position 252 (Ser-252) interacts with substrate.

Belongs to the ketol-acid reductoisomerase family. Mg(2+) is required as a cofactor.

The enzyme catalyses (2R)-2,3-dihydroxy-3-methylbutanoate + NADP(+) = (2S)-2-acetolactate + NADPH + H(+). It carries out the reaction (2R,3R)-2,3-dihydroxy-3-methylpentanoate + NADP(+) = (S)-2-ethyl-2-hydroxy-3-oxobutanoate + NADPH + H(+). It participates in amino-acid biosynthesis; L-isoleucine biosynthesis; L-isoleucine from 2-oxobutanoate: step 2/4. It functions in the pathway amino-acid biosynthesis; L-valine biosynthesis; L-valine from pyruvate: step 2/4. Functionally, involved in the biosynthesis of branched-chain amino acids (BCAA). Catalyzes an alkyl-migration followed by a ketol-acid reduction of (S)-2-acetolactate (S2AL) to yield (R)-2,3-dihydroxy-isovalerate. In the isomerase reaction, S2AL is rearranged via a Mg-dependent methyl migration to produce 3-hydroxy-3-methyl-2-ketobutyrate (HMKB). In the reductase reaction, this 2-ketoacid undergoes a metal-dependent reduction by NADPH to yield (R)-2,3-dihydroxy-isovalerate. In Rhodospirillum rubrum (strain ATCC 11170 / ATH 1.1.1 / DSM 467 / LMG 4362 / NCIMB 8255 / S1), this protein is Ketol-acid reductoisomerase (NADP(+)).